The following is a 379-amino-acid chain: Chaperone protein DnaJ (379 aa).

The 66-residue stretch at 5 to 70 (DYYEVLGVAK…QKRAAYDQYG (66 aa)) folds into the J domain. Residues 139-217 (GYDTQIRVPS…CHGAGKVKET (79 aa)) form a CR-type zinc finger. Residues Cys152, Cys155, Cys169, Cys172, Cys191, Cys194, Cys205, and Cys208 each contribute to the Zn(2+) site. CXXCXGXG motif repeat units follow at residues 152-159 (CEICHGSG), 169-176 (CPTCSGSG), 191-198 (CPKCHGTG), and 205-212 (CGHCHGAG).

This sequence belongs to the DnaJ family. Homodimer. The cofactor is Zn(2+).

The protein resides in the cytoplasm. Participates actively in the response to hyperosmotic and heat shock by preventing the aggregation of stress-denatured proteins and by disaggregating proteins, also in an autonomous, DnaK-independent fashion. Unfolded proteins bind initially to DnaJ; upon interaction with the DnaJ-bound protein, DnaK hydrolyzes its bound ATP, resulting in the formation of a stable complex. GrpE releases ADP from DnaK; ATP binding to DnaK triggers the release of the substrate protein, thus completing the reaction cycle. Several rounds of ATP-dependent interactions between DnaJ, DnaK and GrpE are required for fully efficient folding. Also involved, together with DnaK and GrpE, in the DNA replication of plasmids through activation of initiation proteins. This Paraburkholderia phytofirmans (strain DSM 17436 / LMG 22146 / PsJN) (Burkholderia phytofirmans) protein is Chaperone protein DnaJ.